The following is a 94-amino-acid chain: Acylphosphatase (94 aa).

The Acylphosphatase-like domain occupies 7–94 (RLTARITGVV…GEFDDFRIID (88 aa)). Catalysis depends on residues arginine 22 and asparagine 40.

It belongs to the acylphosphatase family.

The catalysed reaction is an acyl phosphate + H2O = a carboxylate + phosphate + H(+). In Paenarthrobacter aurescens (strain TC1), this protein is Acylphosphatase (acyP).